The following is a 427-amino-acid chain: Peptidase B (427 aa).

Residues lysine 195 and aspartate 200 each contribute to the Mn(2+) site. Lysine 207 is a catalytic residue. Mn(2+) contacts are provided by aspartate 218, aspartate 277, and glutamate 279. Residue arginine 281 is part of the active site.

Belongs to the peptidase M17 family. As to quaternary structure, homohexamer. Mn(2+) serves as cofactor.

The protein localises to the cytoplasm. The catalysed reaction is Release of an N-terminal amino acid, Xaa, from a peptide or arylamide. Xaa is preferably Glu or Asp but may be other amino acids, including Leu, Met, His, Cys and Gln.. In terms of biological role, probably plays an important role in intracellular peptide degradation. The chain is Peptidase B from Shigella flexneri serotype 5b (strain 8401).